A 530-amino-acid polypeptide reads, in one-letter code: Growth-regulating factor 1 (530 aa).

Residues 1–41 are disordered; that stretch reads MDLGVRVSGHETVSSPGQTELGSGFSNKQERSGFDGEDCWR. The segment covering 11 to 27 has biased composition (polar residues); sequence ETVSSPGQTELGSGFSN. A compositionally biased stretch (basic and acidic residues) spans 28 to 41; the sequence is KQERSGFDGEDCWR. In terms of domain architecture, QLQ spans 133-168; that stretch reads PFSLTQWAELEQQALIYKYITANVPVPSSLLLSLKK. In terms of domain architecture, WRC spans 196–240; the sequence is DPEPGRCRRTDGKKWRCSRDAVPDQKYCERHINRGRHRSRKPVEG. Short sequence motifs (bipartite nuclear localization signal) lie at residues 201–211 and 229–236; these read RCRRTDGKKWR and RGRHRSRK. Disordered regions lie at residues 223–250 and 485–530; these read CERH…NAAA and STFG…APSL. The segment covering 485–508 has biased composition (low complexity); it reads STFGSLSNSSSASSTIIGDNNNKN. Polar residues predominate over residues 519–530; the sequence is TLMNTSATAPSL.

The protein belongs to the GRF family. In terms of assembly, interacts with GIF1 and GIF2. As to expression, strongly expressed in actively growing and developing tissues, such as roots, upper stems, and shoot tips containing the shoot apical meristem (SAM) and flower buds. Also expressed in mature flowers, but weakly expressed in mature stems and leaves.

The protein resides in the nucleus. Transcription activator that plays a role in the regulation of cell expansion in leaf and cotyledons tissues. Component of a network formed by miR396, the GRFs and their interacting factors (GIFs) acting in the regulation of meristem function, at least partially through the control of cell proliferation. microRNA396-GRF1/GRF3 regulatory module acts as a developmental regulator in the reprogramming of root cells during cyst nematode infection, leading to the formation of the syncytium. In Arabidopsis thaliana (Mouse-ear cress), this protein is Growth-regulating factor 1 (GRF1).